Reading from the N-terminus, the 117-residue chain is uncharacterized protein (117 aa).

Helical transmembrane passes span 43-63 and 73-93; these read APIM…LMLL and AVQH…VFIV.

It is found in the cell membrane. This is an uncharacterized protein from Bacillus subtilis (strain 168).